Reading from the N-terminus, the 102-residue chain is Large ribosomal subunit protein bL28 (102 aa).

A compositionally biased stretch (polar residues) spans 1–20; sequence MSNSCDLTGHGWQNGNMVSH. Residues 1-27 form a disordered region; sequence MSNSCDLTGHGWQNGNMVSHSNRKTKK.

Belongs to the bacterial ribosomal protein bL28 family.

The protein is Large ribosomal subunit protein bL28 of Neorickettsia sennetsu (strain ATCC VR-367 / Miyayama) (Ehrlichia sennetsu).